An 84-amino-acid chain; its full sequence is N.vectensis toxin 5 (84 aa).

The signal sequence occupies residues 1 to 21; it reads MNSLLKVAVVCLVMLVACSSG. 3 cysteine pairs are disulfide-bonded: C45–C77, C47–C68, and C61–C78.

In terms of tissue distribution, expressed in ectodermal gland cells. In adult female tissues, highly transcribed in mesenteries (gametes-producing tissue) and slightly transcribed in tentacles, pharynx and physa.

Functionally, has toxic effects on zebrafish larvae. It causes contractile paralysis and twitching of the tail within 20 minutes, followed by death within 30 minutes. Does not show any toxicity when injected into arthropods (cherry shrimps or grass shrimps). The protein is N.vectensis toxin 5 of Nematostella vectensis (Starlet sea anemone).